The sequence spans 186 residues: Chromosome-anchoring protein RacA (186 aa).

Residues 3–23 (TADAANELGVSTKTVQRWVKQ) constitute a DNA-binding region (H-T-H motif). Residues 90 to 170 (ERLEERLQRF…NRREKDTAVR (81 aa)) are a coiled coil. Residues 158 to 186 (ESMNRREKDTAVRREEKKPKSKLKSIFSF) form a disordered region. Residues 160 to 175 (MNRREKDTAVRREEKK) are compositionally biased toward basic and acidic residues.

Belongs to the RacA family.

The protein localises to the cytoplasm. Required for the formation of axial filaments and for anchoring the origin regions at the cell poles in sporulating cells, thus ensuring proper chromosome segregation in the prespore. Binds in a dispersed manner throughout the chromosome but preferentially to sites clustered in the origin portion of the chromosome, causing condensation of the chromosome and its remodeling into an elongated, anchored structure. The sequence is that of Chromosome-anchoring protein RacA from Bacillus licheniformis (strain ATCC 14580 / DSM 13 / JCM 2505 / CCUG 7422 / NBRC 12200 / NCIMB 9375 / NCTC 10341 / NRRL NRS-1264 / Gibson 46).